The chain runs to 1958 residues: Probable Rho GTPase-activating protein CG5521 (1958 aa).

Disordered regions lie at residues 1 to 21 (MFTK…QDSK), 400 to 424 (PPFL…RSQR), and 635 to 804 (GSVW…GIEG). Residues 400–414 (PPFLLEPNDDPPPPS) are compositionally biased toward pro residues. A compositionally biased stretch (low complexity) spans 640–656 (GSGSNSAANGGSAASAA). Serine 718, serine 764, and serine 767 each carry phosphoserine. Basic and acidic residues predominate over residues 758 to 774 (DLRRAMSLDSLARKGDA). Positions 775 to 785 (EETDSYQEGDN) are enriched in acidic residues. Phosphoserine is present on residues serine 787, serine 791, serine 793, and serine 795. Positions 788–800 (GAGSRSPSPTASS) are enriched in polar residues. Position 980 is a phosphotyrosine (tyrosine 980). The tract at residues 1534–1568 (HSTQAPSPALRHASSNSSLQQPDQRSLHSTTASFD) is disordered. The span at 1546-1568 (ASSNSSLQQPDQRSLHSTTASFD) shows a compositional bias: polar residues. A Phosphoserine modification is found at serine 1551. The region spanning 1612–1819 (LRNVDLQKCR…EERNRSLDSV (208 aa)) is the Rap-GAP domain. A disordered region spans residues 1903-1958 (ATGMSSASPRGPRKLGAPFKSVTKKHSLQHIAVGGGAGAGGDTPPESPTLPQRRFK). A Phosphothreonine modification is found at threonine 1945. Serine 1949 carries the phosphoserine modification.

This is Probable Rho GTPase-activating protein CG5521 from Drosophila melanogaster (Fruit fly).